A 707-amino-acid chain; its full sequence is Polyribonucleotide nucleotidyltransferase (707 aa).

2 residues coordinate Mg(2+): Asp-488 and Asp-494. The KH domain maps to 555–615 (PIIKVTKIDP…ENVDNAIALI (61 aa)). The S1 motif domain occupies 625–692 (GEILEGKITR…DLGRLQFKRV (68 aa)).

This sequence belongs to the polyribonucleotide nucleotidyltransferase family. Mg(2+) serves as cofactor.

It localises to the cytoplasm. It carries out the reaction RNA(n+1) + phosphate = RNA(n) + a ribonucleoside 5'-diphosphate. Functionally, involved in mRNA degradation. Catalyzes the phosphorolysis of single-stranded polyribonucleotides processively in the 3'- to 5'-direction. In Thermotoga neapolitana (strain ATCC 49049 / DSM 4359 / NBRC 107923 / NS-E), this protein is Polyribonucleotide nucleotidyltransferase.